The chain runs to 661 residues: tRNA uridine 5-carboxymethylaminomethyl modification enzyme MnmG (661 aa).

FAD contacts are provided by residues 16 to 21 (GAGHAG), Val128, and Ser183. A disordered region spans residues 206–230 (PRVNGNTIDYSKTEEEPGDKTPRHF). Basic and acidic residues predominate over residues 216–230 (SKTEEEPGDKTPRHF). Residue 277–291 (GPRYCPSIEDKVVRF) coordinates NAD(+). Gln374 is a binding site for FAD.

Belongs to the MnmG family. In terms of assembly, homodimer. Heterotetramer of two MnmE and two MnmG subunits. FAD is required as a cofactor.

The protein resides in the cytoplasm. NAD-binding protein involved in the addition of a carboxymethylaminomethyl (cmnm) group at the wobble position (U34) of certain tRNAs, forming tRNA-cmnm(5)s(2)U34. The protein is tRNA uridine 5-carboxymethylaminomethyl modification enzyme MnmG of Lactobacillus helveticus (strain DPC 4571).